Reading from the N-terminus, the 367-residue chain is Probable glutamine synthetase (367 aa).

The GS beta-grasp domain maps to 30–110; sequence IQATYVWIDG…VMCDTLDHQM (81 aa). Positions 117-367 constitute a GS catalytic domain; the sequence is HRQACAEIMH…TAMIAQSILF (251 aa).

This sequence belongs to the glutamine synthetase family. Homooctamer.

Its subcellular location is the cytoplasm. The enzyme catalyses L-glutamate + NH4(+) + ATP = L-glutamine + ADP + phosphate + H(+). This is Probable glutamine synthetase (gln-2) from Caenorhabditis elegans.